We begin with the raw amino-acid sequence, 323 residues long: Protein REDOX 2 (323 aa).

Asp53 serves as a coordination point for NADP(+). Residue Tyr58 is the Proton donor of the active site. Substrate is bound at residue His121. NADP(+) contacts are provided by residues 167–168, Gln189, 215–220, and 289–297; these read SN, WSPLLS, and DQIHEIPQR. The interval 302 to 323 is disordered; that stretch reads GEEFMHPEGPIKSPEELWDGDL.

The protein belongs to the aldo/keto reductase family. Monomer. As to expression, expressed in leaf epidermis.

The enzyme catalyses 15alpha-stemmadenine + NADP(+) = 17-dehydrostemmadenine + NADPH + 2 H(+). The protein operates within alkaloid biosynthesis. Functionally, component of iboga and aspidosperma monoterpenoid indole alkaloids (MIAs, e.g. tabersonine and catharanthine) biosynthesis pathway from 19E-geissoschizine. Catalyzes the second oxidation step of the unstable intermediate product resulting from the reaction triggered by the geissoschizine oxidase (GO) in the stemmadenine biosynthesis process from 19E-geissoschizine. The protein is Protein REDOX 2 of Catharanthus roseus (Madagascar periwinkle).